Here is a 183-residue protein sequence, read N- to C-terminus: Inner membrane protein p54 (183 aa).

A helical membrane pass occupies residues 32–52 (YTILIAIVVLVIIIIVLIYLF). The interval 81 to 157 (EVTPQPGTSK…PYTTVTTQNT (77 aa)) is disordered. Residues 111–122 (RPATNKPVTDNP) show a composition bias toward polar residues. Positions 130-143 (ATGGPAAAPAAASA) are enriched in low complexity. The segment at 149-161 (YTTVTTQNTASQT) is interaction with host DYNLL1.

This sequence belongs to the asfivirus envelope protein p54 family. As to quaternary structure, interacts with the host light chain cytoplasmic dynein DYNLL1; this interaction is critical for intracellular microtubule-dependent virus transport toward viral factories.

It localises to the virion membrane. Its subcellular location is the host cytoplasm. The protein resides in the host cytoskeleton. It is found in the host endoplasmic reticulum membrane. In terms of biological role, inner envelope protein involved, through its interaction with host dynein, in the intracellular microtubule-dependent transport of viral capsid toward viral factories. Seems to induce caspase-3 activation and apoptosis. Plays a role in virion morphogenesis by recruiting and transforming the host ER membranes into the precursors of the viral envelope. Involved in virus attachment to the host cell. The sequence is that of Inner membrane protein p54 from African swine fever virus (strain Badajoz 1971 Vero-adapted) (Ba71V).